The following is a 333-amino-acid chain: Bacteriocin helveticin-J (333 aa).

Functionally, this heat-sensitive bacteriocin inhibits the growth of closely related Lactobacillus species. The protein is Bacteriocin helveticin-J (hlv) of Lactobacillus helveticus (Lactobacillus suntoryeus).